We begin with the raw amino-acid sequence, 368 residues long: DNA-directed RNA polymerase subunit alpha (368 aa).

An alpha N-terminal domain (alpha-NTD) region spans residues 1–231; that stretch reads MLWKGFQKPK…DHMNIFINFE (231 aa). Residues 243–368 are alpha C-terminal domain (alpha-CTD); that stretch reads KPEIRNENLN…GFGGDNNPGF (126 aa).

The protein belongs to the RNA polymerase alpha chain family. As to quaternary structure, homodimer. The RNAP catalytic core consists of 2 alpha, 1 beta, 1 beta' and 1 omega subunit. When a sigma factor is associated with the core the holoenzyme is formed, which can initiate transcription.

The catalysed reaction is RNA(n) + a ribonucleoside 5'-triphosphate = RNA(n+1) + diphosphate. In terms of biological role, DNA-dependent RNA polymerase catalyzes the transcription of DNA into RNA using the four ribonucleoside triphosphates as substrates. The sequence is that of DNA-directed RNA polymerase subunit alpha from Koribacter versatilis (strain Ellin345).